The sequence spans 510 residues: Ectonucleoside triphosphate diphosphohydrolase 1 (510 aa).

Residues M1–N16 lie on the Cytoplasmic side of the membrane. Residues I17–L37 form a helical membrane-spanning segment. Residues T38–I478 are Extracellular-facing. An N-linked (GlcNAc...) asparagine glycan is attached at N73. A disulfide bridge connects residues C84 and C108. Residue E174 is the Proton acceptor of the active site. N226, N291, and N333 each carry an N-linked (GlcNAc...) asparagine glycan. 2 disulfides stabilise this stretch: C254–C300 and C281–C324. Disulfide bonds link C337/C342 and C391/C414. 2 N-linked (GlcNAc...) asparagine glycosylation sites follow: N428 and N457. Residues G479–Y499 form a helical membrane-spanning segment. The Cytoplasmic portion of the chain corresponds to S500 to V510.

Belongs to the GDA1/CD39 NTPase family. In terms of assembly, homodimer; disulfide-linked. Ca(2+) serves as cofactor. Requires Mg(2+) as cofactor. In terms of processing, N-glycosylated. The N-terminus is blocked. Post-translationally, palmitoylated on Cys-13; which is required for caveola targeting.

It localises to the membrane. Its subcellular location is the caveola. The catalysed reaction is a ribonucleoside 5'-triphosphate + 2 H2O = a ribonucleoside 5'-phosphate + 2 phosphate + 2 H(+). It catalyses the reaction a ribonucleoside 5'-triphosphate + H2O = a ribonucleoside 5'-diphosphate + phosphate + H(+). The enzyme catalyses a ribonucleoside 5'-diphosphate + H2O = a ribonucleoside 5'-phosphate + phosphate + H(+). It carries out the reaction ATP + 2 H2O = AMP + 2 phosphate + 2 H(+). The catalysed reaction is ATP + H2O = ADP + phosphate + H(+). It catalyses the reaction ADP + H2O = AMP + phosphate + H(+). The enzyme catalyses CTP + 2 H2O = CMP + 2 phosphate + 2 H(+). It carries out the reaction CTP + H2O = CDP + phosphate + H(+). The catalysed reaction is CDP + H2O = CMP + phosphate + H(+). It catalyses the reaction GTP + 2 H2O = GMP + 2 phosphate + 2 H(+). The enzyme catalyses GTP + H2O = GDP + phosphate + H(+). It carries out the reaction GDP + H2O = GMP + phosphate + H(+). The catalysed reaction is ITP + 2 H2O = IMP + 2 phosphate + 2 H(+). It catalyses the reaction ITP + H2O = IDP + phosphate + H(+). The enzyme catalyses IDP + H2O = IMP + phosphate + H(+). It carries out the reaction UTP + 2 H2O = UMP + 2 phosphate + 2 H(+). The catalysed reaction is UTP + H2O = UDP + phosphate + H(+). It catalyses the reaction UDP + H2O = UMP + phosphate + H(+). Its function is as follows. Catalyzes the hydrolysis of both di- and triphosphate nucleotides (NDPs and NTPs) and hydrolyze NTPs to nucleotide monophosphates (NMPs) in two distinct successive phosphate-releasing steps, with NDPs as intermediates and participates in the regulation of extracellular levels of nucleotides. By hydrolyzing proinflammatory ATP and platelet-activating ADP to AMP, it blocks platelet aggregation and supports blood flow. The polypeptide is Ectonucleoside triphosphate diphosphohydrolase 1 (Mus musculus (Mouse)).